Here is a 439-residue protein sequence, read N- to C-terminus: Tryptophan synthase beta chain 2 (439 aa).

Position 99 is an N6-(pyridoxal phosphate)lysine (lysine 99).

Belongs to the TrpB family. As to quaternary structure, tetramer of two alpha and two beta chains. The cofactor is pyridoxal 5'-phosphate.

The catalysed reaction is (1S,2R)-1-C-(indol-3-yl)glycerol 3-phosphate + L-serine = D-glyceraldehyde 3-phosphate + L-tryptophan + H2O. It participates in amino-acid biosynthesis; L-tryptophan biosynthesis; L-tryptophan from chorismate: step 5/5. The beta subunit is responsible for the synthesis of L-tryptophan from indole and L-serine. The sequence is that of Tryptophan synthase beta chain 2 (trpB2) from Corynebacterium efficiens (strain DSM 44549 / YS-314 / AJ 12310 / JCM 11189 / NBRC 100395).